The sequence spans 559 residues: SH3 domain-binding protein 2 (559 aa).

The region spanning 26 to 130 (GVAKAGYLHK…WMAFVRREIG (105 aa)) is the PH domain. A disordered region spans residues 164–449 (LSSYPMDNED…EDSDEDYEKV (286 aa)). The span at 170 to 184 (DNEDYEHEDEDDSYL) shows a compositional bias: acidic residues. Tyr174 and Tyr183 each carry phosphotyrosine; by SYK. The SH3-binding motif lies at 201–210 (PPAYPPPPVP). Composition is skewed to pro residues over residues 202-213 (PAYPPPPVPVPR) and 233-242 (PLLPPPPPKR). Positions 252-265 (EDAKDALGLRRVEP) are enriched in basic and acidic residues. Ser277 is modified (phosphoserine). Low complexity predominate over residues 313-327 (TSSVSSSTTMAVATS). Positions 360–371 (KIAEEPSPREAA) are enriched in basic and acidic residues. Positions 375–386 (PVPPVAPRPPVQ) are enriched in pro residues. Phosphoserine occurs at positions 414 and 425. Positions 437 to 446 (TGEEDSDEDY) are enriched in acidic residues. Tyr446 is modified (phosphotyrosine; by SYK). In terms of domain architecture, SH2 spans 455–553 (VFVNTTESCE…HQSLLLRHPY (99 aa)).

Phosphorylated. Phosphorylation at Tyr-446 may stimulate the activity of the LYN kinase.

Functionally, binds differentially to the SH3 domains of certain proteins of signal transduction pathways. Binds to phosphatidylinositols; linking the hemopoietic tyrosine kinase fes to the cytoplasmic membrane in a phosphorylation dependent mechanism. This is SH3 domain-binding protein 2 (Sh3bp2) from Mus musculus (Mouse).